A 283-amino-acid chain; its full sequence is Gap junction beta-1 protein (283 aa).

The Cytoplasmic portion of the chain corresponds to 1-22 (MNWTGLYTLLSGVNRHSTAIGR). The helical transmembrane segment at 23–45 (VWLSVIFIFRIMVLVVAAESVWG) threads the bilayer. The Extracellular portion of the chain corresponds to 46-75 (DEKSSFICNTLQPGCNSVCYDHFFPISHVR). Residues 76 to 95 (LWSLQLILVSTPALLVAMHV) traverse the membrane as a helical segment. Residues 96 to 130 (AHQQHIEKKMLRLEGHGDPIHLEEVKRHKVHISGT) are Cytoplasmic-facing. A helical membrane pass occupies residues 131–153 (LWWTYVISVVFRLLFEAAFMYVF). Residues 154–191 (YLLYPGYAMVRLVKCDAYPCPNTVDCFVSRPTEKTVFT) are Extracellular-facing. Residues 192–214 (VFMLAASGICIILNVAEVVYLIV) form a helical membrane-spanning segment. Residues 215 to 283 (RACARRAQRR…AEKSDRCSAC (69 aa)) lie on the Cytoplasmic side of the membrane. Phosphoserine is present on residues S233, S258, S266, and S277.

It belongs to the connexin family. Beta-type (group I) subfamily. As to quaternary structure, a connexon is composed of a hexamer of connexins. Interacts with CNST.

It is found in the cell membrane. The protein localises to the cell junction. Its subcellular location is the gap junction. Functionally, one gap junction consists of a cluster of closely packed pairs of transmembrane channels, the connexons, through which materials of low MW diffuse from one cell to a neighboring cell. This Equus caballus (Horse) protein is Gap junction beta-1 protein (GJB1).